A 257-amino-acid polypeptide reads, in one-letter code: MTTTRHSSTDSVNIPGWGWQPFLEDAVQALQPLNLEPYPVANDFLYKQDQTGSKAKPITVTTATWACKTDKFRQVRAACVYGGTAASVLNFVINPSARFDLPFFGGDLVTLPSGHLLALDLQPADKSDEAHTQQVWEKLIPIFERWRSKLPDGGPIPEEAQPFFSPGFLWTRLPLGDEGDQLINSVVRPAFNDYLSLYLELAEAAKPVGDDRRDHLLKGQRRYTDYRAEKDPARGMLTRFHGSDWTEKYIHTVLFDL.

It belongs to the HY2 family.

The catalysed reaction is (3Z)-phycoerythrobilin + oxidized 2[4Fe-4S]-[ferredoxin] = 15,16-dihydrobiliverdin + reduced 2[4Fe-4S]-[ferredoxin] + 2 H(+). In terms of biological role, catalyzes the two-electron reduction of the C2 and C3(1) diene system of 15,16-dihydrobiliverdin. This Synechococcus sp. (strain CC9902) protein is Phycoerythrobilin:ferredoxin oxidoreductase.